The chain runs to 212 residues: Cytidylate kinase (212 aa).

Residue 9-17 (GPAAAGKGT) coordinates ATP.

The protein belongs to the cytidylate kinase family. Type 1 subfamily.

Its subcellular location is the cytoplasm. It carries out the reaction CMP + ATP = CDP + ADP. It catalyses the reaction dCMP + ATP = dCDP + ADP. The polypeptide is Cytidylate kinase (Rhizobium meliloti (strain 1021) (Ensifer meliloti)).